Consider the following 48-residue polypeptide: uncharacterized protein (48 aa).

The disordered stretch occupies residues 1-48 (MVREKKNPSSAAVSAASVKGDAGPTQHYGGGKRTSQNQQYKKHNMGQS). Low complexity predominate over residues 9 to 18 (SSAAVSAASV).

This is an uncharacterized protein from Bacillus subtilis (strain 168).